The sequence spans 708 residues: Elongation factor G (708 aa).

One can recognise a tr-type G domain in the interval 9–289; that stretch reads MFTRNIGIMA…AVCAFLPSPE (281 aa). Residues 18–25, 86–90, and 140–143 each bind GTP; these read AHIDAGKT, DTPGH, and NKMD.

The protein belongs to the TRAFAC class translation factor GTPase superfamily. Classic translation factor GTPase family. EF-G/EF-2 subfamily.

Its subcellular location is the cytoplasm. Its function is as follows. Catalyzes the GTP-dependent ribosomal translocation step during translation elongation. During this step, the ribosome changes from the pre-translocational (PRE) to the post-translocational (POST) state as the newly formed A-site-bound peptidyl-tRNA and P-site-bound deacylated tRNA move to the P and E sites, respectively. Catalyzes the coordinated movement of the two tRNA molecules, the mRNA and conformational changes in the ribosome. This Parabacteroides distasonis (strain ATCC 8503 / DSM 20701 / CIP 104284 / JCM 5825 / NCTC 11152) protein is Elongation factor G.